The primary structure comprises 129 residues: Small ribosomal subunit protein uS9 (129 aa).

This sequence belongs to the universal ribosomal protein uS9 family.

This chain is Small ribosomal subunit protein uS9, found in Chlorobium luteolum (strain DSM 273 / BCRC 81028 / 2530) (Pelodictyon luteolum).